Reading from the N-terminus, the 102-residue chain is Large ribosomal subunit protein mL63 (102 aa).

The protein belongs to the mitochondrion-specific ribosomal protein mL63 family. As to quaternary structure, component of the mitochondrial large ribosomal subunit (mt-LSU). Mature mammalian 55S mitochondrial ribosomes consist of a small (28S) and a large (39S) subunit. The 28S small subunit contains a 12S ribosomal RNA (12S mt-rRNA) and 30 different proteins. The 39S large subunit contains a 16S rRNA (16S mt-rRNA), a copy of mitochondrial valine transfer RNA (mt-tRNA(Val)), which plays an integral structural role, and 52 different proteins.

Its subcellular location is the mitochondrion. The sequence is that of Large ribosomal subunit protein mL63 (MRPL57) from Homo sapiens (Human).